A 257-amino-acid polypeptide reads, in one-letter code: Imidazole glycerol phosphate synthase subunit HisF (257 aa).

Active-site residues include aspartate 12 and aspartate 131.

The protein belongs to the HisA/HisF family. Heterodimer of HisH and HisF.

It localises to the cytoplasm. The enzyme catalyses 5-[(5-phospho-1-deoxy-D-ribulos-1-ylimino)methylamino]-1-(5-phospho-beta-D-ribosyl)imidazole-4-carboxamide + L-glutamine = D-erythro-1-(imidazol-4-yl)glycerol 3-phosphate + 5-amino-1-(5-phospho-beta-D-ribosyl)imidazole-4-carboxamide + L-glutamate + H(+). Its pathway is amino-acid biosynthesis; L-histidine biosynthesis; L-histidine from 5-phospho-alpha-D-ribose 1-diphosphate: step 5/9. In terms of biological role, IGPS catalyzes the conversion of PRFAR and glutamine to IGP, AICAR and glutamate. The HisF subunit catalyzes the cyclization activity that produces IGP and AICAR from PRFAR using the ammonia provided by the HisH subunit. This chain is Imidazole glycerol phosphate synthase subunit HisF, found in Nocardia farcinica (strain IFM 10152).